We begin with the raw amino-acid sequence, 155 residues long: Large ribosomal subunit protein uL16 (155 aa).

The interval 1 to 22 is disordered; the sequence is MLSPKRTKYRKQQRGRMKGKAT.

Belongs to the universal ribosomal protein uL16 family. In terms of assembly, part of the 50S ribosomal subunit.

In terms of biological role, binds 23S rRNA and is also seen to make contacts with the A and possibly P site tRNAs. The protein is Large ribosomal subunit protein uL16 of Synechococcus sp. (strain JA-2-3B'a(2-13)) (Cyanobacteria bacterium Yellowstone B-Prime).